The following is a 323-amino-acid chain: tRNA U34 carboxymethyltransferase (323 aa).

Carboxy-S-adenosyl-L-methionine is bound by residues Lys-91, Trp-105, Lys-110, Gly-130, 181–182 (IE), Met-196, Tyr-200, and Arg-315.

Belongs to the class I-like SAM-binding methyltransferase superfamily. CmoB family. In terms of assembly, homotetramer.

It catalyses the reaction carboxy-S-adenosyl-L-methionine + 5-hydroxyuridine(34) in tRNA = 5-carboxymethoxyuridine(34) in tRNA + S-adenosyl-L-homocysteine + H(+). Its function is as follows. Catalyzes carboxymethyl transfer from carboxy-S-adenosyl-L-methionine (Cx-SAM) to 5-hydroxyuridine (ho5U) to form 5-carboxymethoxyuridine (cmo5U) at position 34 in tRNAs. The sequence is that of tRNA U34 carboxymethyltransferase from Yersinia pestis bv. Antiqua (strain Antiqua).